Consider the following 313-residue polypeptide: Olfactory receptor 5H1 (313 aa).

Residues 1–28 (MEEENATLLTEFVLTGFLYQPQWKIPLF) are Extracellular-facing. An N-linked (GlcNAc...) asparagine glycan is attached at N5. Residues 29–49 (LAFLVIYLITIMGNLGLIAVI) traverse the membrane as a helical segment. Topologically, residues 50-56 (WKDPHLH) are cytoplasmic. A helical membrane pass occupies residues 57–77 (IPMYLLLGNLAFVDAWISSTV). The Extracellular portion of the chain corresponds to 78–98 (TPKMLNNFLAKSKMISLSECK). C97 and C179 are joined by a disulfide. The helical transmembrane segment at 99–119 (IQFFSFAISVTTECFLLATMA) threads the bilayer. Topologically, residues 120-143 (YDRYVAICKPLLYPAIMTNGLCIR) are cytoplasmic. Residues 144-164 (LLILSYVGGILHALIHEGFLF) form a helical membrane-spanning segment. Topologically, residues 165–195 (RLTFCNSNIVHHIYCDTIPLSKISCTDSSIN) are extracellular. Residues 196–216 (FLMVFIFSGSIQVFSIVTILV) form a helical membrane-spanning segment. The Cytoplasmic portion of the chain corresponds to 217–240 (SYTFVLFAILKKKSDKGVRKAFST). The chain crosses the membrane as a helical span at residues 241–261 (CGAHLFSVSLYYGPLLFIYVG). Over 262–271 (PASPQADDQD) the chain is Extracellular. Residues 272–292 (MVEPLFYTVIIPLLNPIIYSL) form a helical membrane-spanning segment. The Cytoplasmic portion of the chain corresponds to 293–313 (RNKQVTVSFTKMLKKHVKVSY).

It belongs to the G-protein coupled receptor 1 family.

It localises to the cell membrane. Functionally, odorant receptor. In Homo sapiens (Human), this protein is Olfactory receptor 5H1 (OR5H1).